Here is a 278-residue protein sequence, read N- to C-terminus: Non-heme chloroperoxidase (278 aa).

Residues 24–259 enclose the AB hydrolase-1 domain; that stretch reads PIVFHHGWPL…LKTYPGYSHG (236 aa). Residues Ser-97, Asp-229, and His-258 contribute to the active site.

Belongs to the AB hydrolase superfamily. Bacterial non-heme haloperoxidase / perhydrolase family. In terms of assembly, homodimer.

Chlorinates and brominates suitable organic compounds. Involved in the biosynthesis of the antibiotic pyrrolnitrin. This is Non-heme chloroperoxidase (cpo) from Burkholderia pyrrocinia (Pseudomonas pyrrocinia).